Here is a 177-residue protein sequence, read N- to C-terminus: Large ribosomal subunit protein bL19 (177 aa).

Belongs to the bacterial ribosomal protein bL19 family.

Functionally, this protein is located at the 30S-50S ribosomal subunit interface and may play a role in the structure and function of the aminoacyl-tRNA binding site. This is Large ribosomal subunit protein bL19 from Rhizobium meliloti (strain 1021) (Ensifer meliloti).